The following is a 794-amino-acid chain: FT-interacting protein 1 (794 aa).

The segment covering 1–27 has biased composition (basic and acidic residues); that stretch reads MAAKDGAKSQEDYKLKDMKPELGERWP. The interval 1 to 34 is disordered; the sequence is MAAKDGAKSQEDYKLKDMKPELGERWPHGGQRGG. C2 domains lie at 37 to 158, 198 to 321, and 364 to 492; these read WIGS…PQWY, VQGE…SKWY, and YISD…THSY. The Ca(2+) site is built by Asp76, Asp123, Glu125, and Glu131. The next 4 helical transmembrane spans lie at 510–532, 595–615, 619–639, and 737–757; these read LAVR…PLLP, IVSV…VCYW, LTTI…ELIL, and LFVI…FKII.

The protein belongs to the MCTP family. As to quaternary structure, interacts with FT in phloem companion cells. Ca(2+) is required as a cofactor. As to expression, expressed in the vascular tissues of roots, cotyledons and rosette leaves. Specifically located in the phloem including companion cells. Observed in flowers. Not detected in the shoot apical meristem.

The protein localises to the endoplasmic reticulum membrane. Its subcellular location is the cell junction. It localises to the plasmodesma. Functionally, involved in the export of FT from the phloem companion cells to the sieve elements through the plasmodesmata. Regulates flowering time under long days. May function as a signaling molecule by regulating the trafficking of other regulators. The chain is FT-interacting protein 1 from Arabidopsis thaliana (Mouse-ear cress).